The sequence spans 380 residues: Erythronate-4-phosphate dehydrogenase (380 aa).

Substrate is bound by residues Ser-45 and Thr-66. Residues 126-127 (QV), Asp-146, Thr-174, 205-207 (ASR), and Asp-231 contribute to the NAD(+) site. Arg-207 is an active-site residue. Residue Glu-236 is part of the active site. His-253 serves as the catalytic Proton donor. Gly-256 lines the NAD(+) pocket. Residue Tyr-257 coordinates substrate.

This sequence belongs to the D-isomer specific 2-hydroxyacid dehydrogenase family. PdxB subfamily. In terms of assembly, homodimer.

The protein localises to the cytoplasm. It carries out the reaction 4-phospho-D-erythronate + NAD(+) = (R)-3-hydroxy-2-oxo-4-phosphooxybutanoate + NADH + H(+). The protein operates within cofactor biosynthesis; pyridoxine 5'-phosphate biosynthesis; pyridoxine 5'-phosphate from D-erythrose 4-phosphate: step 2/5. Its function is as follows. Catalyzes the oxidation of erythronate-4-phosphate to 3-hydroxy-2-oxo-4-phosphonooxybutanoate. The protein is Erythronate-4-phosphate dehydrogenase of Pseudomonas savastanoi pv. phaseolicola (strain 1448A / Race 6) (Pseudomonas syringae pv. phaseolicola (strain 1448A / Race 6)).